A 250-amino-acid chain; its full sequence is Ribosomal RNA small subunit methyltransferase J (250 aa).

S-adenosyl-L-methionine is bound by residues 102–103 (RD), 118–119 (ER), 154–155 (SS), and Asp-172.

The protein belongs to the methyltransferase superfamily. RsmJ family.

Its subcellular location is the cytoplasm. The enzyme catalyses guanosine(1516) in 16S rRNA + S-adenosyl-L-methionine = N(2)-methylguanosine(1516) in 16S rRNA + S-adenosyl-L-homocysteine + H(+). In terms of biological role, specifically methylates the guanosine in position 1516 of 16S rRNA. The polypeptide is Ribosomal RNA small subunit methyltransferase J (Edwardsiella ictaluri (strain 93-146)).